The following is a 148-amino-acid chain: Oleosin 16 kDa (148 aa).

Residues methionine 1 to glutamate 21 are disordered. Position 2 is an N-acetylalanine (alanine 2). Residues alanine 2 to lysine 34 form a polar region. Over residues valine 8–arginine 17 the composition is skewed to gly residues. The segment at threonine 35–tyrosine 106 is hydrophobic. 3 consecutive transmembrane segments (helical) span residues glycine 43–alanine 63, valine 66–alanine 86, and glycine 87–lysine 107.

The protein belongs to the oleosin family.

It is found in the lipid droplet. The protein resides in the membrane. In terms of biological role, may have a structural role to stabilize the lipid body during desiccation of the seed by preventing coalescence of the oil. Probably interacts with both lipid and phospholipid moieties of lipid bodies. May also provide recognition signals for specific lipase anchorage in lipolysis during seedling growth. This is Oleosin 16 kDa (OLE16) from Oryza sativa subsp. japonica (Rice).